The sequence spans 497 residues: Glycerol kinase (497 aa).

An ADP-binding site is contributed by Thr12. ATP is bound by residues Thr12, Thr13, and Ser14. Sn-glycerol 3-phosphate is bound at residue Thr12. ADP is bound at residue Arg16. Sn-glycerol 3-phosphate contacts are provided by Arg82, Glu83, Tyr132, and Asp239. Glycerol is bound by residues Arg82, Glu83, Tyr132, Asp239, and Gln240. Positions 261 and 303 each coordinate ADP. Positions 261, 303, 307, and 402 each coordinate ATP. ADP is bound by residues Gly402 and Asn406.

Belongs to the FGGY kinase family. Homodimer.

It catalyses the reaction glycerol + ATP = sn-glycerol 3-phosphate + ADP + H(+). Its pathway is polyol metabolism; glycerol degradation via glycerol kinase pathway; sn-glycerol 3-phosphate from glycerol: step 1/1. Functionally, key enzyme in the regulation of glycerol uptake and metabolism. Catalyzes the phosphorylation of glycerol to yield sn-glycerol 3-phosphate. Can utilize other nucleoside triphosphates (GTP, CTP, UTP and ITP) as a phosphoryl donor. The polypeptide is Glycerol kinase (Thermococcus kodakarensis (strain ATCC BAA-918 / JCM 12380 / KOD1) (Pyrococcus kodakaraensis (strain KOD1))).